The following is an 80-amino-acid chain: Late cornified envelope protein 6A (80 aa).

Polar residues predominate over residues 1–10 (MSQQKQQSWK). Disordered regions lie at residues 1–21 (MSQQ…SPPQ) and 35–60 (GAPH…ARQK).

Belongs to the LCE family.

Functionally, precursors of the cornified envelope of the stratum corneum. In Homo sapiens (Human), this protein is Late cornified envelope protein 6A (LCE6A).